Reading from the N-terminus, the 428-residue chain is Something about silencing protein 10 (428 aa).

The tract at residues 1-93 (MDSDGDDYVM…NTMDWGSKRS (93 aa)) is disordered. Composition is skewed to acidic residues over residues 15–24 (QEYDDEEREI) and 46–62 (SDDDDDDDDDDEEEQQD). A phosphoserine mark is found at S152, S323, S324, and S337. Residues 317–386 (GQQASVSSDD…LRNPRVKHRG (70 aa)) are disordered. Over residues 324–336 (SDDDDNDDDDDAE) the composition is skewed to acidic residues. Acidic residues predominate over residues 344–353 (EEAGEEEEEE). Residues 370–386 (TPHRKKELRNPRVKHRG) show a composition bias toward basic residues.

The protein belongs to the SAS10 family.

The protein resides in the nucleus. Essential for gene silencing: has a role in the structure of silenced chromatin. May be involved in gene regulation during development. Binds RNA. This is Something about silencing protein 10 from Drosophila melanogaster (Fruit fly).